The sequence spans 325 residues: 2-dehydro-3-deoxygluconokinase (325 aa).

Residues 49–53 (GSEAN), Tyr105, 121–123 (YYR), and Arg181 contribute to the substrate site. Residues 179–181 (NIR), 240–245 (KLGAEG), and 269–272 (GAGD) contribute to the ATP site. Substrate is bound by residues Asp272 and Asp308. Asp272 (proton acceptor) is an active-site residue.

It belongs to the carbohydrate kinase PfkB family. As to quaternary structure, homohexamer; trimer of dimers.

The enzyme catalyses 2-dehydro-3-deoxy-D-gluconate + ATP = 2-dehydro-3-deoxy-6-phospho-D-gluconate + ADP + H(+). It participates in carbohydrate acid metabolism; 2-dehydro-3-deoxy-D-gluconate degradation; D-glyceraldehyde 3-phosphate and pyruvate from 2-dehydro-3-deoxy-D-gluconate: step 1/2. Involved in the degradation of glucose via the semi-phosphorylative Entner-Doudoroff pathway. Catalyzes the phosphorylation of 2-keto-3-deoxygluconate (KDG) yielding 2-keto-3-deoxy-6-phosphogluconate (KDPG). The chain is 2-dehydro-3-deoxygluconokinase (kdgK) from Thermoproteus tenax.